Here is a 347-residue protein sequence, read N- to C-terminus: Hydroxymethylglutaryl-CoA synthase (347 aa).

Residues Asp-29 and Ala-30 each contribute to the (3S)-3-hydroxy-3-methylglutaryl-CoA site. Catalysis depends on Glu-80, which acts as the Proton donor/acceptor. (3S)-3-hydroxy-3-methylglutaryl-CoA is bound by residues Cys-112 and Thr-153. Catalysis depends on Cys-112, which acts as the Acyl-thioester intermediate. Arg-199 is a CoA binding site. (3S)-3-hydroxy-3-methylglutaryl-CoA is bound by residues Thr-201 and His-234. The active-site Proton donor/acceptor is His-234. Residue Lys-239 participates in CoA binding. Residues Arg-243, Asn-266, and Ser-296 each coordinate (3S)-3-hydroxy-3-methylglutaryl-CoA.

The protein belongs to the thiolase-like superfamily. Archaeal HMG-CoA synthase family. Interacts with acetoacetyl-CoA thiolase that catalyzes the precedent step in the pathway and with a DUF35 protein. The acetoacetyl-CoA thiolase/HMG-CoA synthase complex channels the intermediate via a fused CoA-binding site, which allows for efficient coupling of the endergonic thiolase reaction with the exergonic HMGCS reaction.

The catalysed reaction is acetoacetyl-CoA + acetyl-CoA + H2O = (3S)-3-hydroxy-3-methylglutaryl-CoA + CoA + H(+). It participates in metabolic intermediate biosynthesis; (R)-mevalonate biosynthesis; (R)-mevalonate from acetyl-CoA: step 2/3. Its function is as follows. Catalyzes the condensation of acetyl-CoA with acetoacetyl-CoA to form 3-hydroxy-3-methylglutaryl-CoA (HMG-CoA). Functions in the mevalonate (MVA) pathway leading to isopentenyl diphosphate (IPP), a key precursor for the biosynthesis of isoprenoid compounds that are building blocks of archaeal membrane lipids. The chain is Hydroxymethylglutaryl-CoA synthase from Methanocella arvoryzae (strain DSM 22066 / NBRC 105507 / MRE50).